The chain runs to 812 residues: MGQLALQRLQPLASLPRRPPSLPPPSSATPSLPCATASRRPRFYVARAMSSHIVGYPRIGPKRELKFALESFWDGKTNVDDLQNVAANLRKSIWKHMAHAGIKYIPSNTFSYYDQMLDTTAMLGAVPSRYGWESGEIGFDVYFSMARGNASAHAMEMTKWFDTNYHYIVPELGPDVNFSYASHKAVVEFKEAKALGIDTVPVLIGPMTYLLLSKPAKGVEKSFCLLSLIDKILPVYKEVLADLKSAGARWIQFDEPILVMDLDTSQLQAFSDAYSHMESSLAGLNVLIATYFADVPAEAYKTLMSLKCVTGFGFDLVRGLETLDLIKMNFPRGKLLFAGVVDGRNIWANDLSASLKTLQTLEDIVGKEKVVVSTSCSLLHTAVDLVNEMKLDKELKSWLAFAAQKVVEVNALAKSFSGAKDEALFSSNSMRQASRRSSPRVTNAAVQQDVDAVKKSDHHRSTEVSVRLQAQQKKLNLPALPTTTIGSFPQTTDLRRIRREFKAKKISEVDYVQTIKEEYEKVIKLQEELGIDVLVHGEAERNDMVEFFGEQLSGFAFTSNGWVQSYGSRCVKPPIIYGDITRPKAMTVFWSSMAQKMTQRPMKGMLTGPVTILNWSFVRNDQPRHETCFQIALAIKDEVEDLEKAGVTVIQIDEAALREGLPLRKSEQKFYLDWAVHAFRITNSGVQDSTQIHTHMCYSNFNDIIHSIIDMDADVITIENSRSDEKLLSVFHEGVKYGAGIGPGVYDIHSPRIPSTEEIAERINKMLAVLDSKVLWVNPDCGLKTRNYSEVKSALSNMVAAAKLIRSQLNKS.

The N-terminal 33 residues, 1 to 33 (MGQLALQRLQPLASLPRRPPSLPPPSSATPSLP), are a transit peptide targeting the chloroplast. The tract at residues 13–33 (ASLPRRPPSLPPPSSATPSLP) is disordered. Over residues 17–27 (RRPPSLPPPSS) the composition is skewed to pro residues. Positions 66 and 164 each coordinate 5-methyltetrahydropteroyltri-L-glutamate. The disordered stretch occupies residues 430–456 (MRQASRRSSPRVTNAAVQQDVDAVKKS). L-homocysteine contacts are provided by residues 485–487 (IGS) and glutamate 538. Residues 485 to 487 (IGS) and glutamate 538 contribute to the L-methionine site. 5-methyltetrahydropteroyltri-L-glutamate contacts are provided by residues aspartate 543, tyrosine 566, 569 to 570 (RC), and tryptophan 615. Residue aspartate 653 coordinates L-homocysteine. Aspartate 653 is an L-methionine binding site. 5 residues coordinate Zn(2+): histidine 695, cysteine 697, histidine 706, aspartate 710, and glutamate 719. Catalysis depends on histidine 749, which acts as the Proton donor. Residue cysteine 781 participates in Zn(2+) binding.

The protein belongs to the vitamin-B12 independent methionine synthase family. It depends on Zn(2+) as a cofactor. As to expression, expressed in seeds.

Its subcellular location is the plastid. It is found in the chloroplast. It carries out the reaction 5-methyltetrahydropteroyltri-L-glutamate + L-homocysteine = tetrahydropteroyltri-L-glutamate + L-methionine. Its pathway is amino-acid biosynthesis; L-methionine biosynthesis via de novo pathway; L-methionine from L-homocysteine (MetE route): step 1/1. Functionally, catalyzes the transfer of a methyl group from 5-methyltetrahydrofolate to homocysteine resulting in methionine formation. The sequence is that of 5-methyltetrahydropteroyltriglutamate--homocysteine methyltransferase 3, chloroplastic (MS3) from Arabidopsis thaliana (Mouse-ear cress).